We begin with the raw amino-acid sequence, 553 residues long: Chaperonin GroEL 2 (553 aa).

ATP contacts are provided by residues 29–32 (TLGP), 86–90 (DGTTT), glycine 414, and aspartate 495.

This sequence belongs to the chaperonin (HSP60) family. In terms of assembly, forms a cylinder of 14 subunits composed of two heptameric rings stacked back-to-back. Interacts with the co-chaperonin GroES.

It localises to the cytoplasm. It carries out the reaction ATP + H2O + a folded polypeptide = ADP + phosphate + an unfolded polypeptide.. Functionally, together with its co-chaperonin GroES, plays an essential role in assisting protein folding. The GroEL-GroES system forms a nano-cage that allows encapsulation of the non-native substrate proteins and provides a physical environment optimized to promote and accelerate protein folding. The sequence is that of Chaperonin GroEL 2 from Gloeobacter violaceus (strain ATCC 29082 / PCC 7421).